The sequence spans 230 residues: Transmembrane ascorbate ferrireductase 2 (230 aa).

2 consecutive transmembrane segments (helical) span residues 5 to 25 (VLGGFPIFMVVRVLGFIIAAL) and 50 to 70 (VHPVMMVIGLILFNGEAMLAY). A Cytochrome b561 domain is found at 14-218 (VVRVLGFIIA…LGGFVILGVV (205 aa)). H51 is a binding site for heme b. Positions 77 and 81 each coordinate L-ascorbate. The chain crosses the membrane as a helical span at residues 82–102 (LVHLTLQLTAFILSLIGVWAA). H84 provides a ligand contact to heme b. F105, H106, and Y115 together coordinate monodehydro-L-ascorbate radical. Residue H118 coordinates heme b. The helical transmembrane segment at 120–140 (WLGLACLFLFAFQWAAGFVTY) threads the bilayer. 3 residues coordinate L-ascorbate: Y140, R150, and A151. H157 contributes to the heme b binding site. The helical transmembrane segment at 157–177 (HVFLGISIYALALVTATTGIL) threads the bilayer. Residues F182 and N186 each contribute to the monodehydro-L-ascorbate radical site. Residues 198-218 (LVNTMGVLILILGGFVILGVV) traverse the membrane as a helical segment.

As to quaternary structure, homodimer. Heme b serves as cofactor. As to expression, expressed in roots, seedlings, leaves and flowers. Expressed in the L1 layer of the shoot apex, in the epidermis of leaf primordia and young leaves and in vascular bundles. In the differentiation zone of the root, detected in the pericycle and in the epidermis, but not in the cortex. Strongly expressed in the cortical region of the root tip, in the meristematic tissue and in the epidermal cell layer of lateral roots, but not in the root caps. Highly expressed in unfertilized ovules. In mature embryos, expressed in the epidermis, cotyledon tips and root tips.

Its subcellular location is the membrane. It carries out the reaction Fe(3+)(out) + L-ascorbate(in) = monodehydro-L-ascorbate radical(in) + Fe(2+)(out) + H(+). Functionally, two-heme-containing cytochrome. Catalyzes ascorbate-dependent transmembrane ferric-chelate reduction. The protein is Transmembrane ascorbate ferrireductase 2 (CYB561B) of Arabidopsis thaliana (Mouse-ear cress).